The following is a 221-amino-acid chain: 7-cyano-7-deazaguanine synthase (221 aa).

Position 10–20 (10–20 (FSGGQDSTTCL)) interacts with ATP. Cys187, Cys196, Cys199, and Cys202 together coordinate Zn(2+).

The protein belongs to the QueC family. Homodimer. It depends on Zn(2+) as a cofactor.

It carries out the reaction 7-carboxy-7-deazaguanine + NH4(+) + ATP = 7-cyano-7-deazaguanine + ADP + phosphate + H2O + H(+). It participates in purine metabolism; 7-cyano-7-deazaguanine biosynthesis. Functionally, catalyzes the ATP-dependent conversion of 7-carboxy-7-deazaguanine (CDG) to 7-cyano-7-deazaguanine (preQ(0)). The chain is 7-cyano-7-deazaguanine synthase from Shouchella clausii (strain KSM-K16) (Alkalihalobacillus clausii).